Reading from the N-terminus, the 141-residue chain is Hemoglobin subunit alpha-A (141 aa).

Residues 1–141 (VLSAADKANV…VGAVLTAKYR (141 aa)) enclose the Globin domain. H58 contacts O2. H87 is a heme b binding site.

It belongs to the globin family. Heterotetramer of two alpha chains and two beta chains. Red blood cells.

In terms of biological role, involved in oxygen transport from the lung to the various peripheral tissues. The sequence is that of Hemoglobin subunit alpha-A (HBAA) from Chloephaga melanoptera (Andean goose).